The primary structure comprises 393 residues: MLGLRLPVCRRAVMASPRACWRLWHSSTAAAAGMQDLSAVLQRNLALRNQSLYNQSSDTIRCSMFDSDGALIGGAAADIRREELIQKHGLLPRDLRKIEMARRHDLVPIVLVRDRCIMVSLLTIRALVKSDTVLLFDPMGIGMDSVAHTRFVADLQTRLKNQGAPGLGKDPLPYEFRALESIFITALANLTAELRVHLAVTKGALHDLEYGIDKDKLKFLLVQNKKLSVFHKKSLLMREMMDDLMDQDDVLSEMYLSEKMRGKPRDVADHSELEMVLETYYTQVNEIVQSIEGAIANVRTTEEIINIILDSNRNELMLLGLRFAIGLLSLGSVMFVAALYGMNLENFIEEGNVGFALVTATGLVLMVCLFRYSIKRLHKLQKMTLLGGQGRHS.

A mitochondrion-targeting transit peptide spans 1-45; it reads MLGLRLPVCRRAVMASPRACWRLWHSSTAAAAGMQDLSAVLQRNL. A run of 2 helical transmembrane segments spans residues 323–343 and 350–370; these read FAIGLLSLGSVMFVAALYGMN and EGNVGFALVTATGLVLMVCLF. The short motif at 340–343 is the YGMN element; that stretch reads YGMN.

It belongs to the CorA metal ion transporter (MIT) (TC 1.A.35) family. Forms homooligomers. Interacts with MRS2.

The protein resides in the mitochondrion inner membrane. Mitochondrial inner membrane magnesium transporter required for mitochondrial magnesium homeostasis. Modulates the conductance of the MRS2 channel. Involved in the splicing of mRNA group II introns in mitochondria by affecting mitochondrial magnesium concentrations, which are critical for group II intron splicing. This chain is Mitochondrial inner membrane magnesium transporter LPE10 (LPE10), found in Eremothecium gossypii (strain ATCC 10895 / CBS 109.51 / FGSC 9923 / NRRL Y-1056) (Yeast).